The following is a 47-amino-acid chain: Photosystem II reaction center protein K (47 aa).

A propeptide spanning residues 1-10 (MASFTLDLLA) is cleaved from the precursor. A helical membrane pass occupies residues 19-39 (FSPLIDILPLIPVFFLLLAFV).

It belongs to the PsbK family. In terms of assembly, PSII is composed of 1 copy each of membrane proteins PsbA, PsbB, PsbC, PsbD, PsbE, PsbF, PsbH, PsbI, PsbJ, PsbK, PsbL, PsbM, PsbT, PsbX, PsbY, PsbZ, Psb30/Ycf12, peripheral proteins PsbO, CyanoQ (PsbQ), PsbU, PsbV and a large number of cofactors. It forms dimeric complexes.

It localises to the cellular thylakoid membrane. Functionally, one of the components of the core complex of photosystem II (PSII). PSII is a light-driven water:plastoquinone oxidoreductase that uses light energy to abstract electrons from H(2)O, generating O(2) and a proton gradient subsequently used for ATP formation. It consists of a core antenna complex that captures photons, and an electron transfer chain that converts photonic excitation into a charge separation. In Parasynechococcus marenigrum (strain WH8102), this protein is Photosystem II reaction center protein K.